The following is a 92-amino-acid chain: Small ribosomal subunit protein bS6 (92 aa).

It belongs to the bacterial ribosomal protein bS6 family.

Functionally, binds together with bS18 to 16S ribosomal RNA. This chain is Small ribosomal subunit protein bS6, found in Clostridioides difficile (strain 630) (Peptoclostridium difficile).